The sequence spans 367 residues: Histidinol-phosphate aminotransferase (367 aa).

Lys-226 carries the N6-(pyridoxal phosphate)lysine modification.

The protein belongs to the class-II pyridoxal-phosphate-dependent aminotransferase family. Histidinol-phosphate aminotransferase subfamily. As to quaternary structure, homodimer. Requires pyridoxal 5'-phosphate as cofactor.

The enzyme catalyses L-histidinol phosphate + 2-oxoglutarate = 3-(imidazol-4-yl)-2-oxopropyl phosphate + L-glutamate. Its pathway is amino-acid biosynthesis; L-histidine biosynthesis; L-histidine from 5-phospho-alpha-D-ribose 1-diphosphate: step 7/9. The polypeptide is Histidinol-phosphate aminotransferase (Wolinella succinogenes (strain ATCC 29543 / DSM 1740 / CCUG 13145 / JCM 31913 / LMG 7466 / NCTC 11488 / FDC 602W) (Vibrio succinogenes)).